The following is an 877-amino-acid chain: G-protein coupled receptor family C group 6 member A (877 aa).

Positions 1–24 (MAGLDLSLVLMLSVLAGVREVSLT) are cleaved as a signal peptide. Residues 25 to 567 (QVNQQGVIAP…EYFEWNSGFA (543 aa)) lie on the Extracellular side of the membrane. Residues Asn53, Asn99, Asn135, Asn263, Asn310, Asn322, Asn338, and Asn358 are each glycosylated (N-linked (GlcNAc...) asparagine). Asp388 lines the L-lysine pocket. Residues Asn430, Asn475, Asn484, Asn528, and Asn548 are each glycosylated (N-linked (GlcNAc...) asparagine). A helical transmembrane segment spans residues 568-588 (IALLTLAALGILLLISMSALF). The Cytoplasmic portion of the chain corresponds to 589 to 603 (FWQRNSLVVKAAGGP). A helical membrane pass occupies residues 604 to 624 (LCHLILFSLLGSFISVIFFVG). The Extracellular segment spans residues 625 to 635 (EPSNESCRVRQ). An N-linked (GlcNAc...) asparagine glycan is attached at Asn628. Residues 636 to 656 (VIFGLSFTLCVSCILVKSLKI) form a helical membrane-spanning segment. Residues 657–676 (LLAFQMNLELKELLRKLYKP) are Cytoplasmic-facing. A helical transmembrane segment spans residues 677–697 (YVIVCMCMGLQVTICTLWLTL). Topologically, residues 698 to 720 (HRPFIEKVVQPKSILLECNEGSD) are extracellular. Residues 721-741 (LMFGLMLGYIVLLALICFTFA) traverse the membrane as a helical segment. Residues 742–755 (YKGRKLPQKYNEAK) are Cytoplasmic-facing. A helical transmembrane segment spans residues 756–776 (FITFGMLIYLMAWVIFIPVHV). At 777–782 (TTSGKY) the chain is on the extracellular side. Residues 783–803 (VPAVEVVVILISNYGILSCHF) form a helical membrane-spanning segment. Over 804–877 (LPKCYIIIFK…VSVPEIDNVL (74 aa)) the chain is Cytoplasmic.

The protein belongs to the G-protein coupled receptor 3 family. In terms of assembly, homodimer; disulfide-linked. As to expression, expressed in olfactory epithelium. Also expressed in gills, tongue, lips and palatal organ. Not expressed in brain, kidney, liver, muscle, intestine, ovary and skin. In olfactory epithelium, it is widely expressed over the apical and medial portions of the olfactory sensory neurons, regions that contain olfactory neurons. Expressed in external epithelia, which contains taste buds and solitary chemosensory cells. On gill rakers, it is widely expressed in the surface epithelium, but excluded from taste buds.

Its subcellular location is the cell membrane. In terms of biological role, olfactory receptor that is activated by amino acids that act as potent odorants in fish. Most highly activated by basic amino acids such as L-lysine and L-arginine. This is G-protein coupled receptor family C group 6 member A (gprc6a) from Carassius auratus (Goldfish).